Consider the following 325-residue polypeptide: Secreted RxLR effector protein RXLR-C07 (325 aa).

The first 19 residues, 1–19 (MQGVRITILWCIVLATIYA), serve as a signal peptide directing secretion. TPR repeat units follow at residues 37-75 (RGLR…GEER), 92-125 (AQIL…IEKI), 134-167 (GLSL…VKKG), 218-251 (AELY…FLQR), and 260-293 (AFSL…AVSI). The short motif at 37 to 75 (RGLRNAGMKANDERMFKDAIEKLRHAISLLHNRVFGEER) is the RxLR-dEER element.

The protein belongs to the RxLR effector family.

It localises to the secreted. The protein localises to the host cytoplasm. It is found in the host nucleus. Its subcellular location is the host nucleolus. Functionally, secreted effector that suppresses pattern-triggered immunity (PTI) in plant host. The sequence is that of Secreted RxLR effector protein RXLR-C07 from Plasmopara halstedii (Downy mildew of sunflower).